The primary structure comprises 211 residues: Superoxide dismutase [Mn], mitochondrial (211 aa).

The N-terminal 24 residues, methionine 1 to glutamine 24, are a transit peptide targeting the mitochondrion. Histidine 50 lines the Mn(2+) pocket. Tyrosine 58 is subject to 3'-nitrotyrosine. Lysine 68 and lysine 75 each carry N6-acetyllysine; alternate. 2 positions are modified to N6-succinyllysine; alternate: lysine 68 and lysine 75. Histidine 98 is a binding site for Mn(2+). Lysine 114 carries the post-translational modification N6-acetyllysine. N6-acetyllysine; alternate occurs at positions 122 and 130. Residues lysine 122 and lysine 130 each carry the N6-succinyllysine; alternate modification. Residues aspartate 183 and histidine 187 each coordinate Mn(2+). Lysine 202 is subject to N6-acetyllysine.

Belongs to the iron/manganese superoxide dismutase family. Homotetramer. Mn(2+) serves as cofactor. Post-translationally, nitrated under oxidative stress. Nitration coupled with oxidation inhibits the catalytic activity. In terms of processing, acetylation at Lys-122 decreases enzymatic activity. Deacetylated by SIRT3 upon exposure to ionizing radiations or after long fasting. Polyubiquitinated; leading to proteasomal degradation. Deubiquitinated by USP36 which increases protein stability.

The protein resides in the mitochondrion matrix. It catalyses the reaction 2 superoxide + 2 H(+) = H2O2 + O2. In terms of biological role, destroys superoxide anion radicals which are normally produced within the cells and which are toxic to biological systems. The sequence is that of Superoxide dismutase [Mn], mitochondrial (SOD2) from Cavia porcellus (Guinea pig).